Reading from the N-terminus, the 190-residue chain is MTTPIPLARGWLPAAPSTLDPLRKYWLFRPGALTAGLRQLGHVRLRVLAEYPTGAPRDEADGMRIAAQSPVWVREVLMSIDGVDSVVARSLTPLRASHGVWQGMRRLLTRPLADMLYHDPGIHRSVFVCRRLAAGVPFHATAIARAPAGGPEPALWARRSAFWRAGQPLLVAECFLPAFWSLARAPVAPR.

Positions 74, 112, and 173 each coordinate substrate.

This sequence belongs to the UbiC family.

It is found in the cytoplasm. The catalysed reaction is chorismate = 4-hydroxybenzoate + pyruvate. Its pathway is cofactor biosynthesis; ubiquinone biosynthesis. Functionally, removes the pyruvyl group from chorismate, with concomitant aromatization of the ring, to provide 4-hydroxybenzoate (4HB) for the ubiquinone pathway. This Bordetella bronchiseptica (strain ATCC BAA-588 / NCTC 13252 / RB50) (Alcaligenes bronchisepticus) protein is Probable chorismate pyruvate-lyase.